We begin with the raw amino-acid sequence, 545 residues long: Membrane protein insertase YidC (545 aa).

4 helical membrane-spanning segments follow: residues 350 to 370 (IIGN…AVLY), 424 to 444 (LPML…FASV), 461 to 481 (ADPY…QTYL), and 498 to 518 (PLVF…YWVV).

The protein belongs to the OXA1/ALB3/YidC family. Type 1 subfamily. In terms of assembly, interacts with the Sec translocase complex via SecD. Specifically interacts with transmembrane segments of nascent integral membrane proteins during membrane integration.

Its subcellular location is the cell inner membrane. Its function is as follows. Required for the insertion and/or proper folding and/or complex formation of integral membrane proteins into the membrane. Involved in integration of membrane proteins that insert both dependently and independently of the Sec translocase complex, as well as at least some lipoproteins. Aids folding of multispanning membrane proteins. The protein is Membrane protein insertase YidC of Neisseria gonorrhoeae (strain ATCC 700825 / FA 1090).